A 200-amino-acid polypeptide reads, in one-letter code: Holliday junction branch migration complex subunit RuvA (200 aa).

The segment at 1-63 (MYAYVKGKLT…EDAQLLYGFS (63 aa)) is domain I. A domain II region spans residues 64–142 (SEEEKDMFLS…ITEEDSDSLL (79 aa)). Positions 143 to 149 (QVDATST) are flexible linker. Residues 150–200 (VQDQFVQEAMLALEALGYSKRELAKVEKTLNKNKYDSVDEAVKAGLQLVVS) are domain III.

This sequence belongs to the RuvA family. Homotetramer. Forms an RuvA(8)-RuvB(12)-Holliday junction (HJ) complex. HJ DNA is sandwiched between 2 RuvA tetramers; dsDNA enters through RuvA and exits via RuvB. An RuvB hexamer assembles on each DNA strand where it exits the tetramer. Each RuvB hexamer is contacted by two RuvA subunits (via domain III) on 2 adjacent RuvB subunits; this complex drives branch migration. In the full resolvosome a probable DNA-RuvA(4)-RuvB(12)-RuvC(2) complex forms which resolves the HJ.

It is found in the cytoplasm. Functionally, the RuvA-RuvB-RuvC complex processes Holliday junction (HJ) DNA during genetic recombination and DNA repair, while the RuvA-RuvB complex plays an important role in the rescue of blocked DNA replication forks via replication fork reversal (RFR). RuvA specifically binds to HJ cruciform DNA, conferring on it an open structure. The RuvB hexamer acts as an ATP-dependent pump, pulling dsDNA into and through the RuvAB complex. HJ branch migration allows RuvC to scan DNA until it finds its consensus sequence, where it cleaves and resolves the cruciform DNA. The chain is Holliday junction branch migration complex subunit RuvA from Staphylococcus aureus (strain Mu3 / ATCC 700698).